We begin with the raw amino-acid sequence, 203 residues long: Putative 3-methyladenine DNA glycosylase (203 aa).

The protein belongs to the DNA glycosylase MPG family.

The chain is Putative 3-methyladenine DNA glycosylase from Desulfitobacterium hafniense (strain Y51).